We begin with the raw amino-acid sequence, 355 residues long: 6-aminohexanoate-oligomer endohydrolase (355 aa).

Thr-267 serves as the catalytic Nucleophile.

The protein belongs to the peptidase S58 family. As to quaternary structure, heterotetramer composed of 4 alpha/beta heterodimers. Expressed as an inactive precursor that is cleaved autocatalytically at Asn266/Thr267 to generate an active enzyme composed of an alpha subunit and a beta subunit.

The enzyme catalyses [N-(6-aminohexanoyl)]n + H2O = [N-(6-aminohexanoyl)]n-x + [N-(6-aminohexanoyl)]x.. The protein operates within xenobiotic degradation; nylon-6 oligomer degradation. Involved in the degradation of nylon-6 oligomers. Degrades cyclic and linear oligomers of 6-aminohexanoate (Ahx) with a degree of polymerization greater than three by an endo-type mode. Cannot use Ahx cyclic dimer or the Ahx linear dimer. The protein is 6-aminohexanoate-oligomer endohydrolase of Agromyces sp. (strain KY5R).